A 222-amino-acid chain; its full sequence is Translation initiation factor 6 (222 aa).

Belongs to the eIF-6 family.

Binds to the 50S ribosomal subunit and prevents its association with the 30S ribosomal subunit to form the 70S initiation complex. This is Translation initiation factor 6 from Methanocorpusculum labreanum (strain ATCC 43576 / DSM 4855 / Z).